The sequence spans 270 residues: 5-deoxy-glucuronate isomerase (270 aa).

It belongs to the isomerase IolB family.

It catalyses the reaction 5-deoxy-D-glucuronate = 5-dehydro-2-deoxy-D-gluconate. It functions in the pathway polyol metabolism; myo-inositol degradation into acetyl-CoA; acetyl-CoA from myo-inositol: step 4/7. In terms of biological role, involved in the isomerization of 5-deoxy-glucuronate (5DG) to 5-dehydro-2-deoxy-D-gluconate (DKG or 2-deoxy-5-keto-D-gluconate). In Halalkalibacterium halodurans (strain ATCC BAA-125 / DSM 18197 / FERM 7344 / JCM 9153 / C-125) (Bacillus halodurans), this protein is 5-deoxy-glucuronate isomerase.